The chain runs to 214 residues: Ribonuclease P protein component 3 (214 aa).

Belongs to the eukaryotic/archaeal RNase P protein component 3 family. As to quaternary structure, consists of a catalytic RNA component and at least 4-5 protein subunits. Forms a subcomplex with Rnp2 which stimulates the catalytic RNA.

It is found in the cytoplasm. It catalyses the reaction Endonucleolytic cleavage of RNA, removing 5'-extranucleotides from tRNA precursor.. Part of ribonuclease P, a protein complex that generates mature tRNA molecules by cleaving their 5'-ends. The RNA is catalytic, but its KM for pre-tRNA is 170-fold decreased in the presence of the 4 known protein subunits (Rnp1-4). The protein subunits also decrease the amount of Mg(2+) needed for activity. This chain is Ribonuclease P protein component 3, found in Pyrococcus furiosus (strain ATCC 43587 / DSM 3638 / JCM 8422 / Vc1).